A 107-amino-acid chain; its full sequence is Ornithine carbamoyltransferase, catabolic (107 aa).

Carbamoyl phosphate-binding positions include 57 to 61 and Gln84; that span reads STRTR.

It belongs to the aspartate/ornithine carbamoyltransferase superfamily. OTCase family.

It localises to the cytoplasm. The catalysed reaction is carbamoyl phosphate + L-ornithine = L-citrulline + phosphate + H(+). It participates in amino-acid degradation; L-arginine degradation via ADI pathway; carbamoyl phosphate from L-arginine: step 2/2. This Streptococcus pyogenes protein is Ornithine carbamoyltransferase, catabolic (arcB).